The primary structure comprises 431 residues: Divergent protein kinase domain 1B (431 aa).

Over 1-30 (MRRLRRLVHLVLLCPFSKGLQGRLPGLRVK) the chain is Cytoplasmic. A May mediate ER retention motif is present at residues 5 to 6 (RR). The helical transmembrane segment at 31–51 (YVLLVWLGIFVGSWMVYVHYS) threads the bilayer. Topologically, residues 52–431 (SYSELCRGHV…WREISNTNYS (380 aa)) are lumenal. Cystine bridges form between Cys-57/Cys-94 and Cys-62/Cys-117.

It belongs to the DIPK family. In terms of processing, among the many cysteines in the lumenal domain, most are probably involved in disulfide bonds. As to expression, expressed in kidney, testis, lung, heart, stomach, intestine, pancreas, liver and salivary gland. Strongly expressed in acute pancreatitis, brain, and in peripheral endothelial cells.

It localises to the endoplasmic reticulum membrane. This Mus musculus (Mouse) protein is Divergent protein kinase domain 1B (Dipk1b).